Consider the following 145-residue polypeptide: Bacilliredoxin SSP1241 (145 aa).

Belongs to the bacilliredoxin family.

The protein is Bacilliredoxin SSP1241 of Staphylococcus saprophyticus subsp. saprophyticus (strain ATCC 15305 / DSM 20229 / NCIMB 8711 / NCTC 7292 / S-41).